The chain runs to 118 residues: D-dopachrome decarboxylase (118 aa).

P2 is subject to N-acetylproline.

This sequence belongs to the MIF family. In terms of assembly, homotrimer.

Its subcellular location is the cytoplasm. The enzyme catalyses D-dopachrome + H(+) = 5,6-dihydroxyindole + CO2. Tautomerization of D-dopachrome with decarboxylation to give 5,6-dihydroxyindole (DHI). The chain is D-dopachrome decarboxylase (ddt) from Xenopus tropicalis (Western clawed frog).